Consider the following 1205-residue polypeptide: A disintegrin and metalloproteinase with thrombospondin motifs 2 (1205 aa).

Residues 1-28 form the signal peptide; sequence MDPPAGAAGRLLCPALLLLLLLPLPADA. Positions 29-253 are excised as a propeptide; it reads RLAAAAADPP…VNSSRRRMRR (225 aa). Asparagine 104 and asparagine 245 each carry an N-linked (GlcNAc...) asparagine glycan. The Peptidase M12B domain occupies 260–464; that stretch reads YNIEVLLGVD…HSYDCLRDDP (205 aa). Disulfide bonds link cysteine 337–cysteine 386, cysteine 380–cysteine 459, cysteine 419–cysteine 445, cysteine 486–cysteine 511, cysteine 497–cysteine 520, cysteine 506–cysteine 539, cysteine 533–cysteine 544, cysteine 567–cysteine 604, cysteine 571–cysteine 609, and cysteine 582–cysteine 594. Histidine 402 contacts Zn(2+). Glutamate 403 is an active-site residue. Positions 406 and 412 each coordinate Zn(2+). Residues 474-554 enclose the Disintegrin domain; that stretch reads QLPGLHYSMN…IWLTPDILKR (81 aa). The TSP type-1 1 domain maps to 555 to 610; it reads DGNWGAWSPFGSCSRTCGTGVKFRTRQCDNPHPANGGRTCSGLAYDFQLCNSQDCP. A Cell attachment site motif is present at residues 685–687; sequence RGD. The spacer stretch occupies residues 717 to 845; the sequence is KVVKGTFSRS…NVDDNNVLED (129 aa). TSP type-1 domains follow at residues 848-906, 908-968, and 969-1023; these read VGYE…NPQE, SQPV…NREL, and CPGR…GPCP. N-linked (GlcNAc...) asparagine glycans are attached at residues asparagine 942, asparagine 943, and asparagine 987. Cystine bridges form between cysteine 981–cysteine 1017, cysteine 985–cysteine 1022, and cysteine 996–cysteine 1006. An N-linked (GlcNAc...) asparagine glycan is attached at asparagine 1025. The 39-residue stretch at 1053-1091 folds into the PLAC domain; that stretch reads SKGRCQGDKSVFCRMEVLSRYCSIPGYNKLCCKSCNPHD. Residues asparagine 1092, asparagine 1139, and asparagine 1144 are each glycosylated (N-linked (GlcNAc...) asparagine). Residues 1163–1184 are disordered; that stretch reads GLEDEVQPPNLIPRRPSPYEKT.

In terms of assembly, may belong to a multimeric complex. Binds specifically to collagen type XIV. Requires Zn(2+) as cofactor. In terms of processing, the N-terminus is blocked. The precursor is cleaved by a furin endopeptidase. Post-translationally, glycosylated. Can be O-fucosylated by POFUT2 on a serine or a threonine residue found within the consensus sequence C1-X(2)-(S/T)-C2-G of the TSP type-1 repeat domains where C1 and C2 are the first and second cysteine residue of the repeat, respectively. Fucosylated repeats can then be further glycosylated by the addition of a beta-1,3-glucose residue by the glucosyltransferase, B3GALTL. Fucosylation mediates the efficient secretion of ADAMTS family members. Can also be C-glycosylated with one or two mannose molecules on tryptophan residues within the consensus sequence W-X-X-W of the TPRs, and N-glycosylated. These other glycosylations can also facilitate secretion. In terms of tissue distribution, enzymatic activity is detected at high level in all type I collagen-rich tissues such as skin, bones, tendons and aorta and at low level in brain and thymus. The mRNA levels were disproportionately high in heart, liver, retina and muscle.

It is found in the secreted. Its subcellular location is the extracellular space. The protein localises to the extracellular matrix. It carries out the reaction Cleaves the N-propeptide of collagen chain alpha1(I) at Pro-|-Gln and of alpha1(II) and alpha2(I) at Ala-|-Gln.. Cleaves the propeptides of type I and II collagen prior to fibril assembly. Does not act on type III collagen. Cleaves lysyl oxidase LOX at a site downstream of its propeptide cleavage site to produce a short LOX form with reduced collagen-binding activity. This chain is A disintegrin and metalloproteinase with thrombospondin motifs 2 (ADAMTS2), found in Bos taurus (Bovine).